We begin with the raw amino-acid sequence, 261 residues long: Carnitinyl-CoA dehydratase (261 aa).

The active-site Nucleophile is the Glu111. The Proton acceptor role is filled by Glu131.

It belongs to the enoyl-CoA hydratase/isomerase family.

It carries out the reaction (R)-carnitinyl-CoA = crotonobetainyl-CoA + H2O. The protein operates within amine and polyamine metabolism; carnitine metabolism. Functionally, catalyzes the reversible dehydration of L-carnitinyl-CoA to crotonobetainyl-CoA. The chain is Carnitinyl-CoA dehydratase from Escherichia coli (strain ATCC 8739 / DSM 1576 / NBRC 3972 / NCIMB 8545 / WDCM 00012 / Crooks).